Consider the following 140-residue polypeptide: Nucleoside diphosphate kinase (140 aa).

Residues K11, F59, R87, T93, R104, and N114 each contribute to the ATP site. Residue H117 is the Pros-phosphohistidine intermediate of the active site.

This sequence belongs to the NDK family. In terms of assembly, homotetramer. Mg(2+) serves as cofactor.

The protein localises to the cytoplasm. The enzyme catalyses a 2'-deoxyribonucleoside 5'-diphosphate + ATP = a 2'-deoxyribonucleoside 5'-triphosphate + ADP. The catalysed reaction is a ribonucleoside 5'-diphosphate + ATP = a ribonucleoside 5'-triphosphate + ADP. Functionally, major role in the synthesis of nucleoside triphosphates other than ATP. The ATP gamma phosphate is transferred to the NDP beta phosphate via a ping-pong mechanism, using a phosphorylated active-site intermediate. The protein is Nucleoside diphosphate kinase of Bradyrhizobium sp. (strain ORS 278).